The sequence spans 367 residues: Mannan endo-1,4-beta-mannosidase (367 aa).

Residues 1–17 form the signal peptide; sequence MLLTALAVLFASTGCQA. Residues tryptophan 79 and asparagine 176 each contribute to the substrate site. The Proton donor role is filled by glutamate 177. Residues cysteine 192 and cysteine 259 are joined by a disulfide bond. The substrate site is built by tryptophan 205, tryptophan 240, and tyrosine 279. Residue glutamate 308 is the Nucleophile of the active site. Tryptophan 337 provides a ligand contact to substrate.

Monomer. Post-translationally, the disulfide bond between Cys-192 and Cys-259 has not been observed in X-ray crystallography. This may be a consequence of the X-ray radiation.

The enzyme catalyses Random hydrolysis of (1-&gt;4)-beta-D-mannosidic linkages in mannans, galactomannans and glucomannans.. In terms of biological role, hydrolyzes 1,4-beta linked polysaccharide backbones of mannans. Hydrolyzes mannohexaose (M6) preferentially to mannotriose (M4) and less preferentially to mannotetraose (M3), mannopentaose (M5), and mannobiose (M2); hydrolyzes M5 preferentially to M2, and M3, and less preferentially to mannotetraose M4; hydrolyzes M4 preferentially to M3, and less preferentially to mannose (M1), plus very little M2. Does not hydrolyze mannobiose or mannotriose. Does not hydrolyze xlyan, starch, cellulose or galactose. This Mytilus edulis (Blue mussel) protein is Mannan endo-1,4-beta-mannosidase.